The following is a 489-amino-acid chain: DHAGIATQFRVEKKIYDEKKLHRGEYSREYFLEEAHKWVESKSGTILSQLRDMGSSLAWKDTYYTLDEKLSESVIAAFIKLFDEGLIYRSERLVNWDCALKTAISDAEVEYITLTKRTKLNVPNHKYPQYPFGVMAHFYYEICDKDGKKTGEKVEIATTRLETMLGDTAVAINPKDARYNHLHGMYVWHPIREVPIPIIQDEILVDMNFGTGVVKVTPGHDPNDYEVYKRHPEIGLISILTPDGAIAPGYGQFSGMMRFDARVEMVKWMKEHGLYKEEKDHEMRLGITQRGHDIVEQVITPQWFVNTTDMAARAIKAVDDGELKIVPDEFVVDWKKWHENIRPWCISRQLMWGLRIPAYRVQIDGKWAEGNGEWVAAASQEEAIAKGAKANNVVPSRVTVEQDPDVLDTWFSSALLPFSGVGWPSNEERLNRYFPNSILETGWDILTFWVSRMVMMSLTLTNKVPFHTILLHPLVRDAQGRKMSKSFGN.

The short motif at 482–486 (KMSKS) is the 'KMSKS' region element. Lys485 contributes to the ATP binding site.

The protein belongs to the class-I aminoacyl-tRNA synthetase family.

It carries out the reaction tRNA(Val) + L-valine + ATP = L-valyl-tRNA(Val) + AMP + diphosphate. The sequence is that of Valine--tRNA ligase (VALS) from Trichomonas vaginalis.